The sequence spans 120 residues: Superoxide dismutase [Cu-Zn] (120 aa).

Cu cation is bound by residues His-11, His-13, and His-28. Residues 16-52 (GDTTNGCMSTGPHFNPTGKEHGAPQDENRHAGDLGNI) are disordered. An intrachain disulfide couples Cys-22 to Cys-112. Positions 28, 36, 45, and 48 each coordinate Zn(2+). The span at 33 to 47 (GKEHGAPQDENRHAG) shows a compositional bias: basic and acidic residues. His-85 is a binding site for Cu cation.

It belongs to the Cu-Zn superoxide dismutase family. Homodimer. It depends on Cu cation as a cofactor. Requires Zn(2+) as cofactor.

The protein resides in the cytoplasm. It carries out the reaction 2 superoxide + 2 H(+) = H2O2 + O2. Its function is as follows. Destroys radicals which are normally produced within the cells and which are toxic to biological systems. This chain is Superoxide dismutase [Cu-Zn] (sodC), found in Aspergillus japonicus.